Consider the following 275-residue polypeptide: uncharacterized protein (275 aa).

Disordered regions lie at residues 1–25 (MIGGERVLLGSQKREPSNEEDDQEQ) and 185–275 (QRGE…RHHM). Residues 228-239 (KPGDGEENAKDD) are compositionally biased toward basic and acidic residues.

This is an uncharacterized protein from Neurospora crassa (strain ATCC 24698 / 74-OR23-1A / CBS 708.71 / DSM 1257 / FGSC 987).